Consider the following 553-residue polypeptide: Dihydroxy-acid dehydratase (553 aa).

A Mg(2+)-binding site is contributed by Asp78. Residue Cys119 participates in [2Fe-2S] cluster binding. Mg(2+) contacts are provided by Asp120 and Lys121. The residue at position 121 (Lys121) is an N6-carboxylysine. Cys191 lines the [2Fe-2S] cluster pocket. Glu444 lines the Mg(2+) pocket. The Proton acceptor role is filled by Ser470.

The protein belongs to the IlvD/Edd family. As to quaternary structure, homodimer. [2Fe-2S] cluster is required as a cofactor. Mg(2+) serves as cofactor.

It carries out the reaction (2R)-2,3-dihydroxy-3-methylbutanoate = 3-methyl-2-oxobutanoate + H2O. It catalyses the reaction (2R,3R)-2,3-dihydroxy-3-methylpentanoate = (S)-3-methyl-2-oxopentanoate + H2O. It participates in amino-acid biosynthesis; L-isoleucine biosynthesis; L-isoleucine from 2-oxobutanoate: step 3/4. The protein operates within amino-acid biosynthesis; L-valine biosynthesis; L-valine from pyruvate: step 3/4. Functionally, functions in the biosynthesis of branched-chain amino acids. Catalyzes the dehydration of (2R,3R)-2,3-dihydroxy-3-methylpentanoate (2,3-dihydroxy-3-methylvalerate) into 2-oxo-3-methylpentanoate (2-oxo-3-methylvalerate) and of (2R)-2,3-dihydroxy-3-methylbutanoate (2,3-dihydroxyisovalerate) into 2-oxo-3-methylbutanoate (2-oxoisovalerate), the penultimate precursor to L-isoleucine and L-valine, respectively. The protein is Dihydroxy-acid dehydratase of Methanococcoides burtonii (strain DSM 6242 / NBRC 107633 / OCM 468 / ACE-M).